The sequence spans 234 residues: Purine nucleoside phosphorylase DeoD-type (234 aa).

An a purine D-ribonucleoside-binding site is contributed by His5. Phosphate is bound by residues Gly21, Arg25, Arg44, and 88 to 91 (RIGS). Residues 180-182 (EME) and 204-205 (SD) contribute to the a purine D-ribonucleoside site. Asp205 acts as the Proton donor in catalysis.

Belongs to the PNP/UDP phosphorylase family. Homohexamer; trimer of homodimers.

The enzyme catalyses a purine D-ribonucleoside + phosphate = a purine nucleobase + alpha-D-ribose 1-phosphate. The catalysed reaction is a purine 2'-deoxy-D-ribonucleoside + phosphate = a purine nucleobase + 2-deoxy-alpha-D-ribose 1-phosphate. In terms of biological role, catalyzes the reversible phosphorolytic breakdown of the N-glycosidic bond in the beta-(deoxy)ribonucleoside molecules, with the formation of the corresponding free purine bases and pentose-1-phosphate. This Colwellia psychrerythraea (strain 34H / ATCC BAA-681) (Vibrio psychroerythus) protein is Purine nucleoside phosphorylase DeoD-type.